The sequence spans 119 residues: Ribonuclease P protein component (119 aa).

This sequence belongs to the RnpA family. As to quaternary structure, consists of a catalytic RNA component (M1 or rnpB) and a protein subunit.

It carries out the reaction Endonucleolytic cleavage of RNA, removing 5'-extranucleotides from tRNA precursor.. Its function is as follows. RNaseP catalyzes the removal of the 5'-leader sequence from pre-tRNA to produce the mature 5'-terminus. It can also cleave other RNA substrates such as 4.5S RNA. The protein component plays an auxiliary but essential role in vivo by binding to the 5'-leader sequence and broadening the substrate specificity of the ribozyme. The chain is Ribonuclease P protein component from Listeria monocytogenes serotype 4a (strain HCC23).